Reading from the N-terminus, the 151-residue chain is 3-dehydroquinate dehydratase (151 aa).

Catalysis depends on Y24, which acts as the Proton acceptor. 3 residues coordinate substrate: N76, H82, and D89. H102 acts as the Proton donor in catalysis. Residues 103–104 (LS) and R113 contribute to the substrate site.

Belongs to the type-II 3-dehydroquinase family. In terms of assembly, homododecamer.

The catalysed reaction is 3-dehydroquinate = 3-dehydroshikimate + H2O. It functions in the pathway metabolic intermediate biosynthesis; chorismate biosynthesis; chorismate from D-erythrose 4-phosphate and phosphoenolpyruvate: step 3/7. Catalyzes a trans-dehydration via an enolate intermediate. This Acinetobacter baumannii (strain AB307-0294) protein is 3-dehydroquinate dehydratase.